The sequence spans 167 residues: UPF0262 protein Nwi_0248 (167 aa).

Belongs to the UPF0262 family.

The chain is UPF0262 protein Nwi_0248 from Nitrobacter winogradskyi (strain ATCC 25391 / DSM 10237 / CIP 104748 / NCIMB 11846 / Nb-255).